The chain runs to 493 residues: Cytochrome P450 2W1 (493 aa).

Residues methionine 1–glycine 23 form the signal peptide. Asparagine 180 is a glycosylation site (N-linked (GlcNAc...) asparagine). Cysteine 436 contributes to the heme binding site.

It belongs to the cytochrome P450 family. The cofactor is heme. Detected in colon, ileum, and testes.

It is found in the endoplasmic reticulum lumen. The protein resides in the cell membrane. The protein localises to the microsome membrane. It catalyses the reaction all-trans-retinoate + reduced [NADPH--hemoprotein reductase] + O2 = all-trans-4-hydroxyretinoate + oxidized [NADPH--hemoprotein reductase] + H2O + H(+). The enzyme catalyses 1-(9Z-octadecenoyl)-sn-glycero-3-phosphocholine + reduced [NADPH--hemoprotein reductase] + O2 = 1-[8-hydroxy-(9Z)-octadecenoyl]-sn-glycero-3-phosphocholine + oxidized [NADPH--hemoprotein reductase] + H2O + H(+). It carries out the reaction 1-(9Z-octadecenoyl)-sn-glycero-3-phosphocholine + reduced [NADPH--hemoprotein reductase] + O2 = 1-[11-hydroxy-(9Z)-octadecenoyl]-sn-glycero-3-phosphocholine + oxidized [NADPH--hemoprotein reductase] + H2O + H(+). The catalysed reaction is 1-(9Z-octadecenoyl)-sn-glycero-3-phosphocholine + reduced [NADPH--hemoprotein reductase] + O2 = 1-[(9S,10R)-epoxy-octadecanoyl]-sn-glycero-3-phosphocholine + oxidized [NADPH--hemoprotein reductase] + H2O + H(+). It catalyses the reaction 1-(9Z-octadecenoyl)-sn-glycero-3-phosphocholine + reduced [NADPH--hemoprotein reductase] + O2 = 1-[(9R,10S)-epoxy-octadecanoyl]-sn-glycero-3-phosphocholine + oxidized [NADPH--hemoprotein reductase] + H2O + H(+). A cytochrome P450 monooxygenase that may play a role in retinoid and phospholipid metabolism. Catalyzes the hydroxylation of saturated carbon hydrogen bonds. Hydroxylates all trans-retinoic acid (atRA) to 4-hydroxyretinoate and may regulate atRA clearance. Other retinoids such as all-trans retinol and all-trans retinal are potential endogenous substrates. Catalyzes both epoxidation of double bonds and hydroxylation of carbon hydrogen bonds of the fatty acyl chain of 1-acylphospholipids/2-lysophospholipids. Can metabolize various lysophospholipids classes including lysophosphatidylcholines (LPCs), lysophosphatidylinositols (LPIs), lysophosphatidylserines (LPSs), lysophosphatidylglycerols (LPGs), lysophosphatidylethanolamines (LPEs) and lysophosphatidic acids (LPAs). Has low or no activity toward 2-acylphospholipids/1-lysophospholipids, diacylphospholipids and free fatty acids. May play a role in tumorigenesis by activating procarcinogens such as aflatoxin B1, polycyclic aromatic hydrocarbon dihydrodiols and aromatic amines. Mechanistically, uses molecular oxygen inserting one oxygen atom into a substrate, and reducing the second into a water molecule, with two electrons provided by NADPH via cytochrome P450 reductase (CPR; NADPH-ferrihemoprotein reductase). The polypeptide is Cytochrome P450 2W1 (Cyp2w1) (Mus musculus (Mouse)).